A 231-amino-acid polypeptide reads, in one-letter code: GTP-binding protein RHO3 (231 aa).

G23–T30 contributes to the GTP binding site. Positions Y45 to Y53 match the Effector region motif. GTP-binding positions include D70–Q74 and L128–D131. A compositionally biased stretch (polar residues) spans S139–D150. Positions S139–S165 are disordered. The segment covering N151–S165 has biased composition (low complexity). C228 carries the post-translational modification Cysteine methyl ester. A lipid anchor (S-farnesyl cysteine) is attached at C228. A propeptide spans T229–M231 (removed in mature form).

This sequence belongs to the small GTPase superfamily. Rho family. As to quaternary structure, interacts with TOS7.

It localises to the cell membrane. With respect to regulation, activity is positively regulated by the GTPase activating protein (GAP) RGD1. Its function is as follows. Plays an important role in cell growth. Required to keep the uninucleated state. Modulates morphogenesis during bud growth via directing organization of the actin cytoskeleton and the position of the secretory machinery for exocytosis. The chain is GTP-binding protein RHO3 from Saccharomyces cerevisiae (strain ATCC 204508 / S288c) (Baker's yeast).